The primary structure comprises 414 residues: Esterase FrsA (414 aa).

Belongs to the FrsA family.

The catalysed reaction is a carboxylic ester + H2O = an alcohol + a carboxylate + H(+). Catalyzes the hydrolysis of esters. The sequence is that of Esterase FrsA from Escherichia coli (strain K12 / DH10B).